The chain runs to 593 residues: Translation initiation factor IF-2 (593 aa).

The region spanning 101–270 is the tr-type G domain; that stretch reads LRPPVVTIMG…LLIAELEDLR (170 aa). Residues 110-117 are G1; sequence GHVDHGKT. 110-117 provides a ligand contact to GTP; it reads GHVDHGKT. Positions 135–139 are G2; sequence GITQH. The segment at 156-159 is G3; the sequence is DTPG. GTP contacts are provided by residues 156 to 160 and 210 to 213; these read DTPGH and NKMD. Residues 210–213 form a G4 region; that stretch reads NKMD. Positions 246 to 248 are G5; that stretch reads SAR.

The protein belongs to the TRAFAC class translation factor GTPase superfamily. Classic translation factor GTPase family. IF-2 subfamily.

Its subcellular location is the cytoplasm. Functionally, one of the essential components for the initiation of protein synthesis. Protects formylmethionyl-tRNA from spontaneous hydrolysis and promotes its binding to the 30S ribosomal subunits. Also involved in the hydrolysis of GTP during the formation of the 70S ribosomal complex. This is Translation initiation factor IF-2 from Dehalococcoides mccartyi (strain CBDB1).